We begin with the raw amino-acid sequence, 109 residues long: Putative RNase MJ1380 (109 aa).

Active-site residues include arginine 76 and histidine 81. Residues 76–83 carry the RX(4)HXY motif motif; sequence RNILIHKY. An O-di-AMP-tyrosine modification is found at tyrosine 83.

Belongs to the HepT RNase toxin family. As to quaternary structure, homodimer, probably forms a complex with cognate antitoxin MJ1379. In terms of processing, modified by cognate antitoxin MJ1379; probably at least 2 successive AMPylation events occur on Tyr-83.

In terms of biological role, probable toxic component of a putative type VII toxin-antitoxin (TA) system, probably an RNase. Probably neutralized by cognate antitoxin MJ1379. Neutralization may be due to AMPylation by antitoxin MJ1379. This is Putative RNase MJ1380 from Methanocaldococcus jannaschii (strain ATCC 43067 / DSM 2661 / JAL-1 / JCM 10045 / NBRC 100440) (Methanococcus jannaschii).